Here is a 2067-residue protein sequence, read N- to C-terminus: Lipoxygenase homology domain-containing protein 1 (2067 aa).

PLAT domains are found at residues 43-160 (RVYE…RDLL), 172-287 (NKYE…RDIL), 296-412 (ITYI…RQLY), 425-540 (FPWS…REMT), 553-673 (ARYH…RELL), 684-803 (FRYH…VELY), 814-934 (VHYE…RELL), 969-1087 (TTFS…RDLF), 1100-1225 (VPYE…RELV), 1254-1372 (VLYS…RLFY), 1421-1539 (IPYY…RVFD), 1552-1667 (VLYE…CEMC), 1679-1797 (TSYT…RDFA), 1810-1931 (TTYE…VFEV), and 1948-2064 (VKYE…RDLF).

It is found in the cell projection. The protein localises to the stereocilium. In terms of biological role, involved in hearing. Required for normal function of hair cells in the inner ear. This Homo sapiens (Human) protein is Lipoxygenase homology domain-containing protein 1 (LOXHD1).